A 335-amino-acid polypeptide reads, in one-letter code: Mycobacterial beta-ketoacyl-[acyl-carrier-protein] synthase III (335 aa).

Catalysis depends on residues cysteine 122 and histidine 258. The ACP-binding stretch occupies residues 259 to 263; the sequence is QANSR. Asparagine 289 is a catalytic residue.

Belongs to the thiolase-like superfamily. FabH family. Homodimer.

The protein localises to the cytoplasm. The catalysed reaction is malonyl-[ACP] + dodecanoyl-CoA + H(+) = 3-oxotetradecanoyl-[ACP] + CO2 + CoA. It functions in the pathway lipid metabolism; fatty acid biosynthesis. It participates in lipid metabolism; mycolic acid biosynthesis. Functionally, catalyzes the condensation reaction of fatty acid synthesis by the addition to an acyl acceptor of two carbons from malonyl-ACP. Catalyzes the first condensation reaction which initiates fatty acid synthesis and may therefore play a role in governing the total rate of fatty acid production. Possesses both acetoacetyl-ACP synthase and acetyl transacylase activities. Its substrate specificity determines the biosynthesis of branched-chain and/or straight-chain of fatty acids. In Mycobacterium marinum (strain ATCC BAA-535 / M), this protein is Mycobacterial beta-ketoacyl-[acyl-carrier-protein] synthase III.